A 488-amino-acid chain; its full sequence is Transmembrane protein 39A (488 aa).

Residues asparagine 31 and asparagine 39 are each glycosylated (N-linked (GlcNAc...) asparagine). A run of 8 helical transmembrane segments spans residues 72–92 (SLLF…IQYI), 110–130 (TSLN…VMLA), 154–174 (VLIS…CWTL), 182–202 (SVLN…LCCF), 287–307 (EVLF…LCFV), 319–339 (CEHL…QLLP), 420–440 (LLNL…YSLL), and 446–466 (NHTL…FKLL).

It belongs to the TMEM39 family. As to quaternary structure, interacts with SACM1L, SEC23A and SEC24A. In terms of assembly, (Microbial infection) Interacts with encephalomyocarditis virus (EMCV) major capsid proteins VP1 and VP2. Up-regulated in brain tumor glioblastoma multiforme cells (at protein level).

It localises to the endoplasmic reticulum membrane. Functionally, regulates autophagy by controlling the spatial distribution and levels of the intracellular phosphatidylinositol 4-phosphate (PtdIns(4)P) pools. Modulates (PtdIns(4)P) levels by regulating the ER-to-Golgi trafficking of the phosphatidylinositide phosphatase SACM1L. (Microbial infection) Positively regulates the replication of encephalomyocarditis virus (EMCV) via autophagy-dependent pathway. This chain is Transmembrane protein 39A (TMEM39A), found in Homo sapiens (Human).